Consider the following 683-residue polypeptide: Actin-binding LIM protein 3 (683 aa).

Met1 bears the N-acetylmethionine mark. 4 consecutive LIM zinc-binding domains span residues 21 to 80, 80 to 140, 149 to 208, and 208 to 268; these read IQCY…LYGT, TRCD…MASS, SHCA…QFGI, and IKCE…ARAE. Phosphoserine is present on residues Ser277, Ser280, Ser282, Ser286, Ser290, Ser337, Ser372, and Ser373. Residues 372-472 form a disordered region; the sequence is SSPGYIDSPT…EDISQTSKYS (101 aa). Tyr376 carries the phosphotyrosine modification. Phosphoserine is present on residues Ser379 and Ser388. 3 stretches are compositionally biased toward polar residues: residues 380–393, 406–426, and 454–471; these read PTYS…TFSR, GRSS…TSYQ, and STAT…TSKY. Ser493, Ser503, and Ser504 each carry phosphoserine. Thr543 is modified (phosphothreonine). A phosphoserine mark is found at Ser567, Ser576, and Ser607. The region spanning 615-683 is the HP domain; that stretch reads MREYKIYPYE…NELKKQARLF (69 aa). An Omega-N-methylarginine modification is found at Arg631.

In terms of assembly, directly interacts with F-actin and ABRA. In terms of tissue distribution, expressed predominantly in heart and brain.

The protein localises to the cytoplasm. In terms of biological role, may act as scaffold protein. May stimulate ABRA activity and ABRA-dependent SRF transcriptional activity. The protein is Actin-binding LIM protein 3 (ABLIM3) of Homo sapiens (Human).